The chain runs to 444 residues: Chromosome partition protein MukF (444 aa).

The leucine-zipper stretch occupies residues 211-239 (LDETSGNLRELQDTLNAAGDKLQAQLLRI).

It belongs to the MukF family. As to quaternary structure, interacts, and probably forms a ternary complex, with MukE and MukB via its C-terminal region. The complex formation is stimulated by calcium or magnesium. It is required for an interaction between MukE and MukB.

The protein localises to the cytoplasm. The protein resides in the nucleoid. Involved in chromosome condensation, segregation and cell cycle progression. May participate in facilitating chromosome segregation by condensation DNA from both sides of a centrally located replisome during cell division. Not required for mini-F plasmid partitioning. Probably acts via its interaction with MukB and MukE. Overexpression results in anucleate cells. It has a calcium binding activity. The sequence is that of Chromosome partition protein MukF from Actinobacillus succinogenes (strain ATCC 55618 / DSM 22257 / CCUG 43843 / 130Z).